Reading from the N-terminus, the 91-residue chain is Acylphosphatase (91 aa).

One can recognise an Acylphosphatase-like domain in the interval 3–89 (TLLVRISGKV…PDQPGFSQKP (87 aa)). Residues R18 and N36 contribute to the active site.

Belongs to the acylphosphatase family.

It carries out the reaction an acyl phosphate + H2O = a carboxylate + phosphate + H(+). The sequence is that of Acylphosphatase (acyP) from Rhodospirillum rubrum (strain ATCC 11170 / ATH 1.1.1 / DSM 467 / LMG 4362 / NCIMB 8255 / S1).